The primary structure comprises 333 residues: Porphobilinogen deaminase (333 aa).

S-(dipyrrolylmethanemethyl)cysteine is present on cysteine 255.

The protein belongs to the HMBS family. Monomer. It depends on dipyrromethane as a cofactor.

It carries out the reaction 4 porphobilinogen + H2O = hydroxymethylbilane + 4 NH4(+). It participates in porphyrin-containing compound metabolism; protoporphyrin-IX biosynthesis; coproporphyrinogen-III from 5-aminolevulinate: step 2/4. Its function is as follows. Tetrapolymerization of the monopyrrole PBG into the hydroxymethylbilane pre-uroporphyrinogen in several discrete steps. This chain is Porphobilinogen deaminase, found in Burkholderia vietnamiensis (strain G4 / LMG 22486) (Burkholderia cepacia (strain R1808)).